We begin with the raw amino-acid sequence, 34 residues long: Omega/M-ectatotoxin-Et1a subunit B (34 aa).

Cysteines 10 and 32 form a disulfide.

Belongs to the ectatomin family. Ectatomin-Et subfamily. As to quaternary structure, heterodimer of an A and a B chain; disulfide-linked. Expressed by the venom gland.

It localises to the secreted. It is found in the target cell membrane. Functionally, algogenic for animals, human and insects. At high concentrations (0.5-1 uM), it acts as a pore-forming protein that forms nonselective cation channels both in cell and artificial membranes. It is weakly selective for cation over anions channel conductance is identical in both directions. At lower concentrations (1-10 nM), this heterodimer inhibits cardiac L-type calcium currents in isolated rat cardiac ventricular myocytes. This is Omega/M-ectatotoxin-Et1a subunit B from Ectatomma tuberculatum (Selva ant).